Reading from the N-terminus, the 621-residue chain is tRNA uridine 5-carboxymethylaminomethyl modification enzyme MnmG (621 aa).

An FAD-binding site is contributed by 8–13 (GAGHAG). 269–283 (GPRYCPSIEDKIHRF) contributes to the NAD(+) binding site.

The protein belongs to the MnmG family. Homodimer. Heterotetramer of two MnmE and two MnmG subunits. It depends on FAD as a cofactor.

The protein resides in the cytoplasm. Its function is as follows. NAD-binding protein involved in the addition of a carboxymethylaminomethyl (cmnm) group at the wobble position (U34) of certain tRNAs, forming tRNA-cmnm(5)s(2)U34. The chain is tRNA uridine 5-carboxymethylaminomethyl modification enzyme MnmG from Chlorobium phaeovibrioides (strain DSM 265 / 1930) (Prosthecochloris vibrioformis (strain DSM 265)).